Consider the following 65-residue polypeptide: MPKMKTNRAAAKRFRKTASGKYKAGHANRSHILTKKATKRKRNLRQQNHVRAEDAGRLDRMLPYL.

The disordered stretch occupies residues 1 to 65 (MPKMKTNRAA…GRLDRMLPYL (65 aa)). Residues 10 to 44 (AAKRFRKTASGKYKAGHANRSHILTKKATKRKRNL) show a composition bias toward basic residues. A compositionally biased stretch (basic and acidic residues) spans 50 to 65 (VRAEDAGRLDRMLPYL).

It belongs to the bacterial ribosomal protein bL35 family.

This Xylella fastidiosa (strain M12) protein is Large ribosomal subunit protein bL35.